A 545-amino-acid polypeptide reads, in one-letter code: Cannabidiolic acid synthase-like 1 (545 aa).

Positions 1–28 are cleaved as a signal peptide; the sequence is MKCSTFCFWYVCKIIFFFLSFNIQISIA. Residues Cys-37 and Cys-99 are joined by a disulfide bond. 4 N-linked (GlcNAc...) asparagine glycosylation sites follow: Asn-45, Asn-65, Asn-89, and Asn-168. Residues 77–251 enclose the FAD-binding PCMH-type domain; sequence TTPKPLVIIT…AAWKIRLVAV (175 aa). The 6-(S-cysteinyl)-8alpha-(pros-histidyl)-FAD (His-Cys) cross-link spans 114–176; it reads HDAEGMSYIS…ENLSFPAGYC (63 aa). Residue His-292 coordinates substrate. Residues Asn-297, Asn-305, Asn-329, and Asn-361 are each glycosylated (N-linked (GlcNAc...) asparagine). Residue Tyr-417 participates in substrate binding. N-linked (GlcNAc...) asparagine glycosylation is present at Asn-467. Catalysis depends on Tyr-484, which acts as the Proton acceptor. N-linked (GlcNAc...) asparagine glycosylation is present at Asn-499.

Belongs to the oxygen-dependent FAD-linked oxidoreductase family. FAD serves as cofactor. The FAD cofactor is bound via a bicovalent 6-S-cysteinyl, 8alpha-N1-histidyl FAD linkage.

Its subcellular location is the secreted. In terms of biological role, has no cannabidiolic acid synthase activity. The sequence is that of Cannabidiolic acid synthase-like 1 (CBDAS2) from Cannabis sativa (Hemp).